A 764-amino-acid chain; its full sequence is 5-methyltetrahydropteroyltriglutamate--homocysteine methyltransferase (764 aa).

Residues 16 to 19 and Lys117 contribute to the 5-methyltetrahydropteroyltri-L-glutamate site; that span reads RELK. L-homocysteine-binding positions include 442 to 444 and Glu495; that span reads IGS. L-methionine-binding positions include 442 to 444 and Glu495; that span reads IGS. 5-methyltetrahydropteroyltri-L-glutamate is bound by residues 526–527 and Trp572; that span reads RC. Asp610 provides a ligand contact to L-homocysteine. Position 610 (Asp610) interacts with L-methionine. Glu616 serves as a coordination point for 5-methyltetrahydropteroyltri-L-glutamate. Positions 652, 654, and 676 each coordinate Zn(2+). The active-site Proton donor is His705. Cys737 contributes to the Zn(2+) binding site.

This sequence belongs to the vitamin-B12 independent methionine synthase family. Zn(2+) serves as cofactor.

It carries out the reaction 5-methyltetrahydropteroyltri-L-glutamate + L-homocysteine = tetrahydropteroyltri-L-glutamate + L-methionine. Its pathway is amino-acid biosynthesis; L-methionine biosynthesis via de novo pathway; L-methionine from L-homocysteine (MetE route): step 1/1. In terms of biological role, catalyzes the transfer of a methyl group from 5-methyltetrahydrofolate to homocysteine resulting in methionine formation. In Bordetella pertussis (strain Tohama I / ATCC BAA-589 / NCTC 13251), this protein is 5-methyltetrahydropteroyltriglutamate--homocysteine methyltransferase.